The sequence spans 341 residues: UDP-3-O-acylglucosamine N-acyltransferase (341 aa).

Catalysis depends on histidine 241, which acts as the Proton acceptor.

The protein belongs to the transferase hexapeptide repeat family. LpxD subfamily. In terms of assembly, homotrimer.

It catalyses the reaction a UDP-3-O-[(3R)-3-hydroxyacyl]-alpha-D-glucosamine + a (3R)-hydroxyacyl-[ACP] = a UDP-2-N,3-O-bis[(3R)-3-hydroxyacyl]-alpha-D-glucosamine + holo-[ACP] + H(+). Its pathway is bacterial outer membrane biogenesis; LPS lipid A biosynthesis. Functionally, catalyzes the N-acylation of UDP-3-O-acylglucosamine using 3-hydroxyacyl-ACP as the acyl donor. Is involved in the biosynthesis of lipid A, a phosphorylated glycolipid that anchors the lipopolysaccharide to the outer membrane of the cell. This Haemophilus ducreyi (strain 35000HP / ATCC 700724) protein is UDP-3-O-acylglucosamine N-acyltransferase.